The sequence spans 341 residues: Phenylalanine--tRNA ligase alpha subunit (341 aa).

Glutamate 256 is a Mg(2+) binding site.

This sequence belongs to the class-II aminoacyl-tRNA synthetase family. Phe-tRNA synthetase alpha subunit type 1 subfamily. Tetramer of two alpha and two beta subunits. Requires Mg(2+) as cofactor.

The protein resides in the cytoplasm. The enzyme catalyses tRNA(Phe) + L-phenylalanine + ATP = L-phenylalanyl-tRNA(Phe) + AMP + diphosphate + H(+). The chain is Phenylalanine--tRNA ligase alpha subunit from Leptospira interrogans serogroup Icterohaemorrhagiae serovar Lai (strain 56601).